Here is an 892-residue protein sequence, read N- to C-terminus: Alanine--tRNA ligase (892 aa).

Zn(2+) contacts are provided by His-596, His-600, Cys-700, and His-704.

It belongs to the class-II aminoacyl-tRNA synthetase family. Zn(2+) is required as a cofactor.

The protein localises to the cytoplasm. It catalyses the reaction tRNA(Ala) + L-alanine + ATP = L-alanyl-tRNA(Ala) + AMP + diphosphate. Catalyzes the attachment of alanine to tRNA(Ala) in a two-step reaction: alanine is first activated by ATP to form Ala-AMP and then transferred to the acceptor end of tRNA(Ala). Also edits incorrectly charged Ser-tRNA(Ala) and Gly-tRNA(Ala) via its editing domain. The chain is Alanine--tRNA ligase from Methanococcus maripaludis (strain C7 / ATCC BAA-1331).